The sequence spans 134 residues: uncharacterized protein (134 aa).

This is an uncharacterized protein from Homo sapiens (Human).